A 413-amino-acid chain; its full sequence is Serine--tRNA ligase (413 aa).

Thr221–Glu223 serves as a coordination point for L-serine. An ATP-binding site is contributed by Arg252–Glu254. Glu275 lines the L-serine pocket. Glu339–Ser342 provides a ligand contact to ATP. Ser375 lines the L-serine pocket.

This sequence belongs to the class-II aminoacyl-tRNA synthetase family. Type-1 seryl-tRNA synthetase subfamily. In terms of assembly, homodimer. The tRNA molecule binds across the dimer.

It localises to the cytoplasm. It carries out the reaction tRNA(Ser) + L-serine + ATP = L-seryl-tRNA(Ser) + AMP + diphosphate + H(+). The catalysed reaction is tRNA(Sec) + L-serine + ATP = L-seryl-tRNA(Sec) + AMP + diphosphate + H(+). Its pathway is aminoacyl-tRNA biosynthesis; selenocysteinyl-tRNA(Sec) biosynthesis; L-seryl-tRNA(Sec) from L-serine and tRNA(Sec): step 1/1. In terms of biological role, catalyzes the attachment of serine to tRNA(Ser). Is also able to aminoacylate tRNA(Sec) with serine, to form the misacylated tRNA L-seryl-tRNA(Sec), which will be further converted into selenocysteinyl-tRNA(Sec). The protein is Serine--tRNA ligase of Dehalococcoides mccartyi (strain ATCC BAA-2100 / JCM 16839 / KCTC 5957 / BAV1).